Here is a 342-residue protein sequence, read N- to C-terminus: (Lyso)-N-acylphosphatidylethanolamine lipase (342 aa).

Positions 70 to 324 constitute an AB hydrolase-1 domain; it reads PLVMVHGFGG…IEGASHHVYA (255 aa).

The protein belongs to the peptidase S33 family. ABHD4/ABHD5 subfamily.

It carries out the reaction N-hexadecanoyl-1,2-di-(9Z-octadecenoyl)-sn-glycero-3-phosphoethanolamine + H2O = N-hexadecanoyl-1-(9Z-octadecenoyl)-sn-glycero-3-phosphoethanolamine + (9Z)-octadecenoate + H(+). The catalysed reaction is an N-acyl-1,2-diacyl-sn-glycero-3-phosphoethanolamine + H2O = N,1-diacyl-sn-glycero-3-phosphoethanolamine + a fatty acid + H(+). It catalyses the reaction N-hexadecanoyl-1-(9Z-octadecenoyl)-sn-glycero-3-phosphoethanolamine + H2O = N-hexadecanoyl-sn-glycero-3-phosphoethanolamine + (9Z)-octadecenoate + H(+). The enzyme catalyses N-octadecanoyl-1-(9Z-octadecenoyl)-sn-glycero-3-phosphoethanolamine + H2O = N-octadecanoyl-sn-glycero-3-phospho-ethanolamine + (9Z)-octadecenoate + H(+). It carries out the reaction N-eicosanoyl-1-(9Z-octadecenoyl)-sn-glycero-3-phosphoethanolamine + H2O = N-eicosanoyl-sn-glycero-3-phosphoethanolamine + (9Z)-octadecenoate + H(+). The catalysed reaction is N,1-di-(9Z-octadecenoyl)-sn-glycero-3-phosphoethanolamine + H2O = N-(9Z-octadecenoyl)-sn-glycero-3-phosphoethanolamine + (9Z)-octadecenoate + H(+). It catalyses the reaction N-(5Z,8Z,11Z,14Z-eicosatetraenoyl)-1-(9Z-octadecenoyl)-sn-glycero-3-phosphoethanolamine + H2O = N-(5Z,8Z,11Z,14Z-eicosatetraenoyl)-sn-glycero-3-phosphoethanolamine + (9Z)-octadecenoate + H(+). The enzyme catalyses 1-octadecanoyl-2-(9Z-octadecenoyl)-sn-glycero-3-phospho-(N-hexadecanoyl)-serine + H2O = 1-octadecanoyl-2-hydroxy-sn-glycero-3-phospho-(N-hexadecanoyl)-serine + (9Z)-octadecenoate + H(+). It carries out the reaction 1-O-(1Z-octadecenoyl)-2-(9Z-octadecenoyl)-sn-glycero-3-phospho-N-hexadecanoyl-ethanolamine + H2O = 1-O-(1Z-octadecenyl)-sn-glycero-3-phospho-N-hexadecanoyl-ethanolamine + (9Z)-octadecenoate + H(+). The catalysed reaction is N,1-diacyl-sn-glycero-3-phosphoethanolamine + H2O = N-acyl-sn-glycero-3-phosphoethanolamine + a fatty acid + H(+). Lysophospholipase selective for N-acyl phosphatidylethanolamine (NAPE). Contributes to the biosynthesis of N-acyl ethanolamines, including the endocannabinoid anandamide by hydrolyzing the sn-1 and sn-2 acyl chains from N-acyl phosphatidylethanolamine (NAPE) generating glycerophospho-N-acyl ethanolamine (GP-NAE), an intermediate for N-acyl ethanolamine biosynthesis. Hydrolyzes substrates bearing saturated, monounsaturated, polyunsaturated N-acyl chains. Shows no significant activity towards other lysophospholipids, including lysophosphatidylcholine, lysophosphatidylethanolamine and lysophosphatidylserine. This Bos taurus (Bovine) protein is (Lyso)-N-acylphosphatidylethanolamine lipase.